A 107-amino-acid chain; its full sequence is uncharacterized protein (107 aa).

The segment at methionine 1–proline 32 is disordered. Residues aspartate 22–glutamate 31 show a composition bias toward basic and acidic residues.

This is an uncharacterized protein from Mus musculus (Mouse).